We begin with the raw amino-acid sequence, 156 residues long: Holliday junction resolvase (156 aa).

The protein belongs to the RuvC family. Poxviruses-type subfamily. It depends on Mg(2+) as a cofactor.

Nuclease that specifically cleaves and resolves four-way DNA Holliday junctions into linear duplex products. In Vertebrata (FPV), this protein is Holliday junction resolvase.